The sequence spans 278 residues: MWSNMDDKKVKEEKILHNSTNKKIIRHEDFVAGISKGMAILDSFGTDRHRLNITMAAEKTGMTRAAARRHLLTLEYLGYLESDGHYFYLTPKILKFSGSYLGGAQLPKISQPLLNLLTTQTSLIYSVMVLDGYEAITIARSAAHQQTDRVNPYGLHLGNRLPAHATSAGKILLAYLDDHAQQEWLNQYPLQRLTKYTYTNNIDFLRLLSEIKEQGWCYSSEEHELGVHALAVPIYGQQSRVVAALNIVSPTMRTTKEYLIQHILPLLQETARELRNIL.

Residues 31-91 (VAGISKGMAI…SDGHYFYLTP (61 aa)) enclose the HTH iclR-type domain. Positions 53–72 (ITMAAEKTGMTRAAARRHLL) form a DNA-binding region, H-T-H motif. An IclR-ED domain is found at 106–278 (LPKISQPLLN…ETARELRNIL (173 aa)).

Activates transcription of the pca operon. The protein is Pca operon regulatory protein (pcaU) of Acinetobacter baylyi (strain ATCC 33305 / BD413 / ADP1).